Here is a 163-residue protein sequence, read N- to C-terminus: Probable ribosome biogenesis protein RLP24 (163 aa).

Belongs to the eukaryotic ribosomal protein eL24 family. In terms of assembly, associated with nucleolar and cytoplasmic pre-60S particles. At the end of biogenesis it dissociates from cytoplasmic pre-60S particles and is likely to be exchanged for its ribosomal homolog, RPL24.

Its subcellular location is the nucleus. It localises to the nucleolus. Involved in the biogenesis of the 60S ribosomal subunit. Ensures the docking of GTPBP4/NOG1 to pre-60S particles. This chain is Probable ribosome biogenesis protein RLP24 (RSL24D1), found in Homo sapiens (Human).